The following is a 395-amino-acid chain: Tubulin-like protein CetZ1 (395 aa).

Residues Gln-10–Lys-14, Gly-110–Gly-112, Glu-142, Asn-169, and Asn-187 contribute to the GTP site.

Belongs to the CetZ family.

The protein localises to the cytoplasm. Involved in cell shape control. Essential for the development of a rod-shaped cell type required for efficient swimming. The sequence is that of Tubulin-like protein CetZ1 from Haloferax volcanii (strain ATCC 29605 / DSM 3757 / JCM 8879 / NBRC 14742 / NCIMB 2012 / VKM B-1768 / DS2) (Halobacterium volcanii).